Here is a 599-residue protein sequence, read N- to C-terminus: ATP-dependent rRNA helicase SPB4 (599 aa).

Positions 7 to 35 (WDTLDYTLQPWIRTAVDAMGYETMTPVQA) match the Q motif motif. The region spanning 38 to 224 (IPLFARNKDV…KTGMRNPVKV (187 aa)) is the Helicase ATP-binding domain. Residue 51–58 (SVTGSGKT) participates in ATP binding. The DEAD box motif lies at 172–175 (DEAD). Residues 248 to 415 (KLQLLLTLLN…GLPEIIRAWI (168 aa)) form the Helicase C-terminal domain. A coiled-coil region spans residues 501–561 (QREKARKLAK…LKRKAIEEKL (61 aa)). The segment at 559–599 (EKLIENSDDSDNEVETDWKDIVRQRKKKKTNSGMQGDFGDL) is disordered. Positions 564-573 (NSDDSDNEVE) are enriched in acidic residues.

This sequence belongs to the DEAD box helicase family. DDX55/SPB4 subfamily. Component of pre-60S ribosomal complexes.

The protein localises to the nucleus. The protein resides in the nucleolus. The catalysed reaction is ATP + H2O = ADP + phosphate + H(+). In terms of biological role, ATP-binding RNA helicase involved in the biogenesis of 60S ribosomal subunits. Binds 90S pre-ribosomal particles and dissociates from pre-60S ribosomal particles after processing of 27SB pre-rRNA. Required for the normal formation of 18S rRNA through the processing of pre-rRNAs at sites A0, A1 and A2, and the normal formation of 25S and 5.8S rRNAs through the processing of pre-rRNAs at sites C1 and C2. This chain is ATP-dependent rRNA helicase SPB4, found in Eremothecium gossypii (strain ATCC 10895 / CBS 109.51 / FGSC 9923 / NRRL Y-1056) (Yeast).